Consider the following 344-residue polypeptide: Dihydroorotase (344 aa).

The Zn(2+) site is built by H13 and H15. Residues 15–17 and N41 contribute to the substrate site; that span reads HLR. Positions 98, 135, and 173 each coordinate Zn(2+). K98 bears the N6-carboxylysine mark. Residue H135 participates in substrate binding. Substrate is bound at residue L218. Zn(2+) is bound at residue D247. The active site involves D247. Residues H251 and A263 each coordinate substrate.

It belongs to the metallo-dependent hydrolases superfamily. DHOase family. Class II DHOase subfamily. Homodimer. It depends on Zn(2+) as a cofactor.

It catalyses the reaction (S)-dihydroorotate + H2O = N-carbamoyl-L-aspartate + H(+). Its pathway is pyrimidine metabolism; UMP biosynthesis via de novo pathway; (S)-dihydroorotate from bicarbonate: step 3/3. Functionally, catalyzes the reversible cyclization of carbamoyl aspartate to dihydroorotate. This Neisseria meningitidis serogroup C / serotype 2a (strain ATCC 700532 / DSM 15464 / FAM18) protein is Dihydroorotase.